Consider the following 462-residue polypeptide: Fez family zinc finger protein 1 (462 aa).

An Engrailed homology 1 repressor motif is present at residues 34–49 (PLAFSIERIMSRTPEP). 6 C2H2-type zinc fingers span residues 260-282 (FTCE…MPVH), 288-310 (FVCK…KIIH), 316-338 (HKCN…TRIH), 344-366 (FVCE…KLTH), 372-394 (FKCN…MHTH), and 400-423 (FTCP…RKLH). Positions 441–462 (LLLPNREPSPTIQSPQLQKSGY) are disordered. Residues 448–462 (PSPTIQSPQLQKSGY) show a composition bias toward polar residues.

The protein belongs to the krueppel C2H2-type zinc-finger protein family.

It localises to the nucleus. Transcription repressor. Involved in the development of the forebrain region. The polypeptide is Fez family zinc finger protein 1 (fezf1) (Xenopus tropicalis (Western clawed frog)).